A 502-amino-acid chain; its full sequence is Probable cytosol aminopeptidase (502 aa).

Positions 269 and 274 each coordinate Mn(2+). Lys281 is a catalytic residue. Asp292, Asp351, and Glu353 together coordinate Mn(2+). Residue Arg355 is part of the active site.

It belongs to the peptidase M17 family. It depends on Mn(2+) as a cofactor.

The protein localises to the cytoplasm. The catalysed reaction is Release of an N-terminal amino acid, Xaa-|-Yaa-, in which Xaa is preferably Leu, but may be other amino acids including Pro although not Arg or Lys, and Yaa may be Pro. Amino acid amides and methyl esters are also readily hydrolyzed, but rates on arylamides are exceedingly low.. It carries out the reaction Release of an N-terminal amino acid, preferentially leucine, but not glutamic or aspartic acids.. Presumably involved in the processing and regular turnover of intracellular proteins. Catalyzes the removal of unsubstituted N-terminal amino acids from various peptides. The sequence is that of Probable cytosol aminopeptidase from Photobacterium profundum (strain SS9).